The primary structure comprises 2879 residues: Peramine synthetase ppzA (2879 aa).

A compositionally biased stretch (basic and acidic residues) spans 1 to 12; that stretch reads MTYDEGGHRNNE. The interval 1 to 52 is disordered; the sequence is MTYDEGGHRNNEETPQDVNMSSNNEGMSTSSPTGSYGEIIGQATVSVPQEDQ. Over residues 16-34 the composition is skewed to polar residues; it reads QDVNMSSNNEGMSTSSPTG. The tract at residues 351–747 is adenylation 1; it reads QEQCRLQPNT…VGRKDTQVKI (397 aa). A Carrier 1 domain is found at 882–958; sequence QPLSDMERLL…DLSRQSKYIE (77 aa). S919 carries the O-(pantetheine 4'-phosphoryl)serine modification. Residues 997 to 1410 form a condensation region; that stretch reads DAYPCTPLQE…ITILTTEDLE (414 aa). Residues 1433 to 1827 are adenylation 2; that stretch reads DKVQHRPNAP…LSFVRRKDTT (395 aa). A methylation (Met) domain region spans residues 1958–2050; that stretch reads LEIGCGSGMM…KYLVKLIQDI (93 aa). The Carrier 2 domain maps to 2370 to 2448; the sequence is WPTTDTGKEL…RLLLDCCCDD (79 aa). Residue S2407 is modified to O-(pantetheine 4'-phosphoryl)serine. Residues 2500 to 2817 are thiesterase (TE) domain; the sequence is TVLLTGANGF…LEDMLQDLDD (318 aa).

This sequence belongs to the NRP synthetase family. Pantetheine 4'-phosphate serves as cofactor.

The enzyme catalyses (S)-1-pyrroline-5-carboxylate + L-arginine + S-adenosyl-L-methionine + 2 ATP = peramine + 2 AMP + S-adenosyl-L-homocysteine + 2 diphosphate + H2O + 2 H(+). Its pathway is secondary metabolite biosynthesis. Functionally, nonribosomal peptide synthetase; part of the gene cluster that mediates the biosynthesis of pyrrolopyrazines, secondary metabolites showing insecticidal activity. The single multifunctional NRPS ppzA is responsible for the biosynthesis of peramine. The condensation domain of ppzA is proposed to catalyze formation of a peptide bond between 1-pyrroline-5-carboxylate and arginine. The methylation domain of ppzA would catalyze the N-methylation of the alpha-amino group of arginine. The reductase domain is proposed to be responsible for reduction of the thioester and the cyclization to form an iminium ion resulting in release from the peptide synthetase. Deprotonation of this intermediate and oxidation of the pyrroline ring would give rise to peramine. This final oxidation to give the pyrrole functionality may be spontaneous. In Epichloe species that produce only peramine, the peramine synthetase gene is not localized in a gene cluster, in contrast to Metarhizium species that contain additional pyrrolopyrazine biosynthesis genes. The 2-oxoglutarate-Fe(II) type oxidoreductase ppzC hydroxylates peramine to yield the newly identified compound 8-hydroxyperamine whereas ppzD converts L-proline into trans-4-hydroxy-L-proline, a precursor of peramine biosynthesis. The protein is Peramine synthetase ppzA of Metarhizium rileyi (strain RCEF 4871) (Nomuraea rileyi).